The following is a 463-amino-acid chain: MTTETRSLYSQLPAIDRLLRDSSFLSLRDTYGHTRVVELLRQMLDEAREVIRGSQTLPAWCENWAQEVDARLTKEAQSALRPVINLTGTVLHTNLGRALQAEAAVEAVAQAMRSPVTLEYDLDDAGRGHRDRALAQLLCRITGAEDACIVNNNAAAVLLMLAATASGKEVVVSRGELVEIGGAFRIPDVMRQAGCTLHEVGTTNRTHANDYRQAVNENTALLMKVHTSNYSIQGFTKAIDEAELVALGKELDVPVVTDLGSGSLVDLSQYGLPKEPMPQELIAAGVSLVSFSGDKLLGGPQAGIIVGKKEMIARLQSHPLKRALRADKMTLAALEATLRLYLHPEALSEKLPTLRLLTRSAEVIQIQAQRLQAPLAAHYGAEFAVQVMPCLSQIGSGSLPVDRLPSAALTFTPHDGRGSHLESLAARWRELPVPVIGRIYDGRLWLDLRCLEDEQRFLEMLLK.

Lysine 295 bears the N6-(pyridoxal phosphate)lysine mark.

This sequence belongs to the SelA family. In terms of assembly, homodecamer; pentamer of dimers. Binds only one seryl-tRNA(Sec) per dimer. It depends on pyridoxal 5'-phosphate as a cofactor.

It is found in the cytoplasm. It carries out the reaction L-seryl-tRNA(Sec) + selenophosphate + H(+) = L-selenocysteinyl-tRNA(Sec) + phosphate. It functions in the pathway aminoacyl-tRNA biosynthesis; selenocysteinyl-tRNA(Sec) biosynthesis; selenocysteinyl-tRNA(Sec) from L-seryl-tRNA(Sec) (bacterial route): step 1/1. Functionally, converts seryl-tRNA(Sec) to selenocysteinyl-tRNA(Sec) required for selenoprotein biosynthesis. The chain is L-seryl-tRNA(Sec) selenium transferase from Escherichia coli (strain 55989 / EAEC).